A 195-amino-acid chain; its full sequence is Imidazoleglycerol-phosphate dehydratase (195 aa).

Belongs to the imidazoleglycerol-phosphate dehydratase family.

The protein localises to the cytoplasm. The enzyme catalyses D-erythro-1-(imidazol-4-yl)glycerol 3-phosphate = 3-(imidazol-4-yl)-2-oxopropyl phosphate + H2O. Its pathway is amino-acid biosynthesis; L-histidine biosynthesis; L-histidine from 5-phospho-alpha-D-ribose 1-diphosphate: step 6/9. This is Imidazoleglycerol-phosphate dehydratase from Alkaliphilus metalliredigens (strain QYMF).